Consider the following 104-residue polypeptide: Small ribosomal subunit protein uS10 (104 aa).

It belongs to the universal ribosomal protein uS10 family. In terms of assembly, part of the 30S ribosomal subunit.

In terms of biological role, involved in the binding of tRNA to the ribosomes. The sequence is that of Small ribosomal subunit protein uS10 from Variovorax paradoxus (strain S110).